Here is a 750-residue protein sequence, read N- to C-terminus: Signal transducer and activator of transcription 1-alpha/beta (750 aa).

The residue at position 2 (Ser-2) is an N-acetylserine. N6-methyllysine occurs at positions 114, 175, 296, 366, 525, and 637. A coiled-coil region spans residues 136–317 (LDKQKELDSK…LFQQLIQSSF (182 aa)). An SH2 domain is found at 573–670 (WNDGCIMGFI…ENPLKYLYPN (98 aa)). Glu-657 carries the post-translational modification ADP-ribosyl glutamic acid; by PARP14. Lys-665 carries the post-translational modification N6-methyllysine. Position 701 is a phosphotyrosine; by JAK1, JAK2 or TYK2 (Tyr-701). A Glycyl lysine isopeptide (Lys-Gly) (interchain with G-Cter in SUMO1); alternate cross-link involves residue Lys-703. Residue Lys-703 forms a Glycyl lysine isopeptide (Lys-Gly) (interchain with G-Cter in SUMO2); alternate linkage. At Glu-705 the chain carries ADP-ribosyl glutamic acid; by PARP14. Ser-708 is subject to Phosphoserine; by IKKE. Ser-727 bears the Phosphoserine; by CAMK2 and MAPK14 mark. At Ser-745 the chain carries Phosphoserine; by IKKE. Thr-749 bears the Phosphothreonine; by IKKB mark.

The protein belongs to the transcription factor STAT family. As to quaternary structure, isoform alpha homodimerizes upon IFN-gamma induced phosphorylation. Heterodimer with STAT2 upon IFN-alpha/beta induced phosphorylation. The heterodimer STAT1:STAT2 forms the interferon-stimulated gene factor 3 complex (ISGF3) with IRF9. Interacts (phosphorylated at Ser-727) with PIAS1; the interaction results in release of STAT1 from its target gene. Interacts with IFNAR1; the interaction requires the phosphorylation of IFNAR1 at 'Tyr-466'. Interacts with IFNAR2. Found in a complex with NMI and CREBBP/CBP. Interacts with NMI which is required for CREBBP/CBP recruitment to the complex. Interacts with PTK2/FAK1. Interacts with SRC. Interacts with ERBB4 (phosphorylated). Interacts with PARP9 and DTX3L independently of IFN-beta or IFN-gamma-mediated STAT1 'Tyr-701' phosphorylation. Interacts with histone acetyltransferase EP300/p300 in response to INF-gamma stimulation. Independently of its phosphorylation status, interacts with OTOP1. Interacts with IFNGR1. Interacts with STAT4. (Microbial infection) Interacts with Sendai virus C', C, Y1 and Y2 proteins, preventing activation of ISRE and GAS promoter. In terms of assembly, (Microbial infection) Interacts with Nipah virus P, V and W proteins preventing activation of ISRE and GAS promoter. As to quaternary structure, (Microbial infection) Interacts with Rabies virus phosphoprotein preventing activation of ISRE and GAS promoter. (Microbial infection) Interacts with HCV core protein; the interaction results in STAT1 degradation. In terms of assembly, (Microbial infection) Interacts with ebolavirus protein VP24. As to quaternary structure, (Microbial infection) Interacts with Epstein-Barr virus (EBV) tegument protein BGLF2; this interaction leads to STAT1 dephosphorylation and inhibition. (Microbial infection) Interacts (via N-terminus) with measles V protein; this interaction inhibits STAT1 phosphorylation by Jak1 and thereby the type I interferon signaling pathway. Deubiquitinated by USP13; leading to STAT1 stabilization and positive regulation of type I and type II IFN signalings. In terms of processing, phosphorylated on tyrosine and serine residues in response to a variety of cytokines/growth hormones including IFN-alpha, IFN-gamma, PDGF and EGF. Activated KIT promotes phosphorylation on tyrosine residues and subsequent translocation to the nucleus. Upon EGF stimulation, phosphorylation on Tyr-701 (lacking in beta form) by JAK1, JAK2 or TYK2 promotes dimerization and subsequent translocation to the nucleus. Growth hormone (GH) activates STAT1 signaling only via JAK2. Tyrosine phosphorylated in response to constitutively activated FGFR1, FGFR2, FGFR3 and FGFR4. Phosphorylation on Ser-727 by several kinases including MAPK14, ERK1/2, CAMK2/CAMKII and CK2 in response to IFN-gamma stimulation, is required for maximal transcriptional activity. Phosphorylated on Ser-727 by CAMK2/CAMKII in response to IFN-gamma stimulation and calcium mobilization, promoting activity. Phosphorylated by CAMK2/CAMKII in response to IFN-beta stimulation and calcium mobilization in epithelial cells, promoting activity. Phosphorylation on Ser-727 promotes sumoylation though increasing interaction with PIAS. Phosphorylation on Ser-727 by PRKCD induces apoptosis in response to DNA-damaging agents. Phosphorylated on tyrosine residues when PTK2/FAK1 is activated; most likely this is catalyzed by a SRC family kinase. Dephosphorylation on tyrosine residues by PTPN2 negatively regulates interferon-mediated signaling. Upon viral infection or IFN induction, phosphorylation on Ser-708 occurs much later than phosphorylation on Tyr-701 and is required for the binding of ISGF3 on the ISREs of a subset of IFN-stimulated genes IKBKE-dependent. Phosphorylation at Tyr-701 and Ser-708 are mutually exclusive, phosphorylation at Ser-708 requires previous dephosphorylation of Tyr-701. Phosphorylation at Thr-749 by IKBKB/IKKB promotes transcriptional activation of ARID5A and IL12B by STAT1. Phosphorylation at Thr-749 restricts interferon signaling and anti-inflammatory responses and promotes innate inflammatory responses. Post-translationally, sumoylated with SUMO1, SUMO2 and SUMO3. Sumoylation is enhanced by IFN-gamma-induced phosphorylation on Ser-727, and by interaction with PIAS proteins. Enhances the transactivation activity. ISGylated. In terms of processing, mono-ADP-ribosylated at Glu-657 and Glu-705 by PARP14; ADP-ribosylation prevents phosphorylation at Tyr-701. However, the role of ADP-ribosylation in the prevention of phosphorylation has been called into question and the lack of phosphorylation may be due to sumoylation of Lys-703. Post-translationally, monomethylated at Lys-525 by SETD2; monomethylation is necessary for phosphorylation at Tyr-701, translocation into the nucleus and activation of the antiviral defense. (Microbial infection) Ubiquitinated by Herpes simplex virus 2 E3 ubiquitin ligase ICP22.

The protein resides in the cytoplasm. It localises to the nucleus. Functionally, signal transducer and transcription activator that mediates cellular responses to interferons (IFNs), cytokine KITLG/SCF and other cytokines and other growth factors. Following type I IFN (IFN-alpha and IFN-beta) binding to cell surface receptors, signaling via protein kinases leads to activation of Jak kinases (TYK2 and JAK1) and to tyrosine phosphorylation of STAT1 and STAT2. The phosphorylated STATs dimerize and associate with ISGF3G/IRF-9 to form a complex termed ISGF3 transcription factor, that enters the nucleus. ISGF3 binds to the IFN stimulated response element (ISRE) to activate the transcription of IFN-stimulated genes (ISG), which drive the cell in an antiviral state. In response to type II IFN (IFN-gamma), STAT1 is tyrosine- and serine-phosphorylated. It then forms a homodimer termed IFN-gamma-activated factor (GAF), migrates into the nucleus and binds to the IFN gamma activated sequence (GAS) to drive the expression of the target genes, inducing a cellular antiviral state. Becomes activated in response to KITLG/SCF and KIT signaling. May mediate cellular responses to activated FGFR1, FGFR2, FGFR3 and FGFR4. Following bacterial lipopolysaccharide (LPS)-induced TLR4 endocytosis, phosphorylated at Thr-749 by IKBKB which promotes binding of STAT1 to the 5'-TTTGAGGC-3' sequence in the ARID5A promoter, resulting in transcriptional activation of ARID5A and subsequent ARID5A-mediated stabilization of IL6. Phosphorylation at Thr-749 also promotes binding of STAT1 to the 5'-TTTGAGTC-3' sequence in the IL12B promoter and activation of IL12B transcription. Involved in food tolerance in small intestine: associates with the Gasdermin-D, p13 cleavage product (13 kDa GSDMD) and promotes transcription of CIITA, inducing type 1 regulatory T (Tr1) cells in upper small intestine. This is Signal transducer and activator of transcription 1-alpha/beta (STAT1) from Homo sapiens (Human).